A 380-amino-acid chain; its full sequence is MIYLPDGVQDFLPEEYKFKRKIEEKFREVFIKFGYQEIMPPTFEYSDNFSVLFDENNLYRFFDKKGNILALRPDVTTQIARIVSTKLKGSFPLKLCYVANVYRYDDPQVGKMREFTQAGIELIGTNHEESDAEIIAVAIEALKSVGIKDFKVDVGQVEFFKRVVEDLELQNEEINLLREFLQQKNQSAIEEFINDKGIRGKKAKFLSELPLLFGGEEVLKRAKELYDTPKLGETIDYLERVYRILKDFGMEEYISFDLGMVQNLNYYTGIIFRCFVKGIGYAICTGGRYDGLLGIFGEHIPATGFAISVERSMLALQKQKKDIIDKSWRVLIKYKENLRSNAYKKATLLRGEGKIVEMYSYEKAKHVDENSFDEIIDMEE.

This sequence belongs to the class-II aminoacyl-tRNA synthetase family. HisZ subfamily. In terms of assembly, heteromultimer composed of HisG and HisZ subunits.

The protein localises to the cytoplasm. It functions in the pathway amino-acid biosynthesis; L-histidine biosynthesis; L-histidine from 5-phospho-alpha-D-ribose 1-diphosphate: step 1/9. Functionally, required for the first step of histidine biosynthesis. May allow the feedback regulation of ATP phosphoribosyltransferase activity by histidine. The sequence is that of ATP phosphoribosyltransferase regulatory subunit from Thermoanaerobacter pseudethanolicus (strain ATCC 33223 / 39E) (Clostridium thermohydrosulfuricum).